A 145-amino-acid polypeptide reads, in one-letter code: 3-hydroxyacyl-[acyl-carrier-protein] dehydratase FabZ (145 aa).

Residue H48 is part of the active site.

It belongs to the thioester dehydratase family. FabZ subfamily.

The protein localises to the cytoplasm. The catalysed reaction is a (3R)-hydroxyacyl-[ACP] = a (2E)-enoyl-[ACP] + H2O. Involved in unsaturated fatty acids biosynthesis. Catalyzes the dehydration of short chain beta-hydroxyacyl-ACPs and long chain saturated and unsaturated beta-hydroxyacyl-ACPs. The chain is 3-hydroxyacyl-[acyl-carrier-protein] dehydratase FabZ from Geobacillus thermodenitrificans (strain NG80-2).